A 332-amino-acid polypeptide reads, in one-letter code: Leucine carboxyl methyltransferase 1 (332 aa).

S-adenosyl-L-methionine-binding positions include arginine 71, glycine 96, aspartate 120, 169-170 (DL), and glutamate 196.

This sequence belongs to the methyltransferase superfamily. LCMT family.

It carries out the reaction [phosphatase 2A protein]-C-terminal L-leucine + S-adenosyl-L-methionine = [phosphatase 2A protein]-C-terminal L-leucine methyl ester + S-adenosyl-L-homocysteine. Functionally, methylates the carboxyl group of the C-terminal leucine residue of protein phosphatase 2A catalytic subunits to form alpha-leucine ester residues. This chain is Leucine carboxyl methyltransferase 1 (Lcmt1), found in Rattus norvegicus (Rat).